The primary structure comprises 858 residues: Leucine--tRNA ligase (858 aa).

Positions 42-52 match the 'HIGH' region motif; it reads PYPSGRLHMGH. Residues 618 to 622 carry the 'KMSKS' region motif; the sequence is KMSKS. Residue Lys-621 coordinates ATP.

Belongs to the class-I aminoacyl-tRNA synthetase family.

The protein resides in the cytoplasm. It catalyses the reaction tRNA(Leu) + L-leucine + ATP = L-leucyl-tRNA(Leu) + AMP + diphosphate. The polypeptide is Leucine--tRNA ligase (Vibrio atlanticus (strain LGP32) (Vibrio splendidus (strain Mel32))).